The chain runs to 1302 residues: 1-phosphatidylinositol 4,5-bisphosphate phosphodiesterase gamma-1 (1302 aa).

Alanine 2 is subject to N-acetylalanine. The 116-residue stretch at 27 to 142 (RSLEVGTVMT…WIKGLTWLME (116 aa)) folds into the PH 1 domain. Positions 152–187 (QIERWLRKQFYSVDRNREDRISAKDLKNMLSQVNYR) constitute an EF-hand domain. Residues aspartate 165, asparagine 167, glutamate 169, arginine 171, and aspartate 176 each contribute to the Ca(2+) site. In terms of domain architecture, PI-PLC X-box spans 320–464 (DTMNNPLSHY…LRRKILIKHK (145 aa)). Residues histidine 335 and histidine 380 contribute to the active site. A PH 2; first part domain is found at 489 to 523 (SIKNGILYLEDPVNHEWYPHYFVLTSSKIYYSEET). Phosphotyrosine is present on tyrosine 506. Residues 522–545 (ETSSDQGNEDEEEPKEASSSTELH) form a disordered region. 2 SH2 domains span residues 550–657 (WFHG…SEPV) and 668–756 (WYHA…RYPI). At tyrosine 771 the chain carries Phosphotyrosine; by SYK. Tyrosine 775 carries the post-translational modification Phosphotyrosine. Tyrosine 783 carries the phosphotyrosine; by ITK, SYK and TXK modification. The SH3 domain occupies 791–851 (TFKCAVKALF…PSNYVEEMIN (61 aa)). The 37-residue stretch at 895–931 (FVFSISMPSVAQWSLDVAADSQEELQDWVKKIREVAQ) folds into the PH 2; second part domain. A PI-PLC Y-box domain is found at 953 to 1070 (LSELVVYCRP…GYVLQPSTMR (118 aa)). Tyrosine 977 is subject to Phosphotyrosine. The C2 domain occupies 1071–1194 (DEAFDPFDKS…TGYRAVPLKN (124 aa)). Phosphoserine occurs at positions 1221, 1227, 1233, and 1248. The residue at position 1253 (tyrosine 1253) is a Phosphotyrosine. The residue at position 1263 (serine 1263) is a Phosphoserine.

As to quaternary structure, interacts (via SH2 domain) with FGFR1, FGFR2, FGFR3 and FGFR4 (phosphorylated). Interacts with RALGPS1. Interacts (via SH2 domains) with VIL1 (phosphorylated at C-terminus tyrosine phosphorylation sites). Interacts (via SH2 domain) with RET. Interacts with AGAP2 via its SH3 domain. Interacts with LAT (phosphorylated) upon TCR activation. Interacts (via SH3 domain) with the Pro-rich domain of TNK1. Associates with BLNK, VAV1, GRB2 and NCK1 in a B-cell antigen receptor-dependent fashion. Interacts with CBLB in activated T-cells; which inhibits phosphorylation. Interacts with SHB. Interacts (via SH3 domain) with the Arg/Gly-rich-flanked Pro-rich domains of KHDRBS1/SAM68. This interaction is selectively regulated by arginine methylation of KHDRBS1/SAM68. Interacts with INPP5D/SHIP1, THEMIS and CLNK. Interacts with FLT4 and KIT. Interacts with AXL. Interacts with SYK; activates PLCG1. Interacts with FLT1 (tyrosine-phosphorylated). Interacts (via SH2 domain) with PDGFRA and PDGFRB (tyrosine phosphorylated). Interacts with PIP5K1C. Interacts with NTRK1 and NTRK2 (phosphorylated upon ligand-binding). Interacts with TESPA1. Interacts with GRB2, LAT and THEMIS upon TCR activation in thymocytes; the association is weaker in the absence of TESPA1. Interacts (via C-terminal proline-rich domain (PRD)) with PLCG1 (via SH3 domain); this interaction leads to guanine nucleotide exchange from PlCG1 to DNM1 and enhances DNM1-dependent endocytosis. The cofactor is Ca(2+). In terms of processing, tyrosine phosphorylated in response to signaling via activated FLT3, KIT and PDGFRA. Tyrosine phosphorylated by activated FGFR1, FGFR2, FGFR3 and FGFR4. Tyrosine phosphorylated by activated FLT1 and KDR. Tyrosine phosphorylated by activated PDGFRB. The receptor-mediated activation of PLCG1 involves its phosphorylation by tyrosine kinases in response to ligation of a variety of growth factor receptors and immune system receptors. For instance, SYK phosphorylates and activates PLCG1 in response to ligation of the B-cell receptor. Phosphorylated by ITK and TXK on Tyr-783 upon TCR activation in T-cells. May be dephosphorylated by PTPRJ. Post-translationally, ubiquitinated by CBLB in activated T-cells.

The protein localises to the cell projection. Its subcellular location is the lamellipodium. It is found in the ruffle. The enzyme catalyses a 1,2-diacyl-sn-glycero-3-phospho-(1D-myo-inositol-4,5-bisphosphate) + H2O = 1D-myo-inositol 1,4,5-trisphosphate + a 1,2-diacyl-sn-glycerol + H(+). It catalyses the reaction a 1,2-diacyl-sn-glycero-3-phospho-(1D-myo-inositol) + H2O = 1D-myo-inositol 1-phosphate + a 1,2-diacyl-sn-glycerol + H(+). Its activity is regulated as follows. Activated by phosphorylation on tyrosine residues. Mediates the production of the second messenger molecules diacylglycerol (DAG) and inositol 1,4,5-trisphosphate (IP3). Plays an important role in the regulation of intracellular signaling cascades. Becomes activated in response to ligand-mediated activation of receptor-type tyrosine kinases, such as PDGFRA, PDGFRB, EGFR, FGFR1, FGFR2, FGFR3 and FGFR4. Plays a role in actin reorganization and cell migration. Guanine nucleotide exchange factor that binds the GTPase DNM1 and catalyzes the dissociation of GDP, allowing a GTP molecule to bind in its place, therefore enhancing DNM1-dependent endocytosis. In Mus musculus (Mouse), this protein is 1-phosphatidylinositol 4,5-bisphosphate phosphodiesterase gamma-1.